The chain runs to 152 residues: Deoxyuridine 5'-triphosphate nucleotidohydrolase (152 aa).

Substrate-binding positions include 71–73 (RSG), Asn84, 88–90 (LID), and Met98.

It belongs to the dUTPase family. Mg(2+) serves as cofactor.

It catalyses the reaction dUTP + H2O = dUMP + diphosphate + H(+). It functions in the pathway pyrimidine metabolism; dUMP biosynthesis; dUMP from dCTP (dUTP route): step 2/2. Functionally, this enzyme is involved in nucleotide metabolism: it produces dUMP, the immediate precursor of thymidine nucleotides and it decreases the intracellular concentration of dUTP so that uracil cannot be incorporated into DNA. This chain is Deoxyuridine 5'-triphosphate nucleotidohydrolase, found in Salmonella arizonae (strain ATCC BAA-731 / CDC346-86 / RSK2980).